Consider the following 331-residue polypeptide: GTP-binding protein RHO5 (331 aa).

10–17 (GDGAVGKT) contacts GTP. The interval 51–76 (ASSPLELDNGNDKRGSLSSASSSPST) is disordered. Positions 66–75 (SLSSASSSPS) are enriched in low complexity. GTP-binding positions include 87 to 91 (DTAGQ) and 156 to 159 (TKSD). Ser-223 and Ser-228 each carry phosphoserine. Phosphothreonine is present on residues Thr-232 and Thr-244. The segment at 239–331 (TATTNTNGDK…KKKKSKCVIL (93 aa)) is disordered. Residues 258-273 (HHNNSTDSTLPKGSLQ) show a composition bias toward polar residues. Lys-276 participates in a covalent cross-link: Glycyl lysine isopeptide (Lys-Gly) (interchain with G-Cter in ubiquitin). Basic and acidic residues predominate over residues 287–297 (GQKDKIHEQSK). A compositionally biased stretch (basic residues) spans 308-331 (HHNKQAKPKTRNDKKKKKSKCVIL). Cys-328 is modified (cysteine methyl ester). The S-geranylgeranyl cysteine moiety is linked to residue Cys-328. Positions 329–331 (VIL) are cleaved as a propeptide — removed in mature form.

This sequence belongs to the small GTPase superfamily. Rho family. As to quaternary structure, interacts with RGD2.

It is found in the membrane. It localises to the mitochondrion. Small GTPase that negatively regulates a MAP kinase branch, downstream of SLT2, of the PKC1-mediated signal transduction pathway. With its specific guanine nucleotide exchange factor (GEF), the heterodimeric complex DCK1/LMO1, relocates to mitochondria upon oxidative stress and triggers cell death. The DCK1/LMO1/RHO5 signaling module that mediates mitochondrial turnover under nitrogen starvation conditions via mitophagy. The DCK1/LMO1/RHO5 signaling module also plays a role in cell wall integrity signaling. This chain is GTP-binding protein RHO5, found in Saccharomyces cerevisiae (strain ATCC 204508 / S288c) (Baker's yeast).